The primary structure comprises 468 residues: ATP synthase subunit beta (468 aa).

Residue Gly-155–Thr-162 coordinates ATP.

The protein belongs to the ATPase alpha/beta chains family. In terms of assembly, F-type ATPases have 2 components, CF(1) - the catalytic core - and CF(0) - the membrane proton channel. CF(1) has five subunits: alpha(3), beta(3), gamma(1), delta(1), epsilon(1). CF(0) has three main subunits: a(1), b(2) and c(9-12). The alpha and beta chains form an alternating ring which encloses part of the gamma chain. CF(1) is attached to CF(0) by a central stalk formed by the gamma and epsilon chains, while a peripheral stalk is formed by the delta and b chains.

It localises to the cell inner membrane. It carries out the reaction ATP + H2O + 4 H(+)(in) = ADP + phosphate + 5 H(+)(out). Its function is as follows. Produces ATP from ADP in the presence of a proton gradient across the membrane. The catalytic sites are hosted primarily by the beta subunits. This is ATP synthase subunit beta from Bdellovibrio bacteriovorus (strain ATCC 15356 / DSM 50701 / NCIMB 9529 / HD100).